We begin with the raw amino-acid sequence, 1070 residues long: MSNARRRFSTVTQINTEGLQAMGKGGGRMETVGEDGIPADYKGNRKFTTSLGHLALYKEDEGIGTQASFISGYTTPGPKERATSEHVKANLGVMLGVYLPTIQHILGVTMFIRLFWVVGMSGVAWTMALLAICCLSTLLTSISLSAVATNGVVESGGAYFIISRNLGAEFGSAVGILFYLANTVAASMYIVGGVEVILMYLWPEMAIGGADALHDTEMFGSLYNNLRLYGTVFLLIQALIVAMGVKFVQLLAPVSLMCVILAIAACIGGGIEKQITMEGMKVCAIDNHLLQSSIVTHPIHKNQTSWFNETVDFCNLCDKSLYLESVFCANVNNDEASAEDDVFCTHYTSKKMTCQLAFPGFNMKTLNDNMWPEYMEKSEVVPGVRGKETAEVVQDESSTFFMLMAIYFPAVTGIFTGTNMSGDLRDPQRSIPVGTIAATLTTSAIYYILAILFGGSITRSVLRDKFGRSIGNTMVVAALSWPHPAVVTVGAFLSTFGAALQCLCSAPRLLQSIAKDDVIPILAPFARVTKNNEPFLGLVLTVIIAECGILLGAVDKIAEVLDFFFLMCYAFVNLIAVLHSVLKSPNWRPRFKYFHWTLSLLGAALCFFIMFASSVPLACIACTATAVIYKYVEWKGAKKEWGDGMRGLALTTAQYSLLKVEDKDPHPKNWRPQVLILLTSQWSKEMIDRRAVSMLNLGAQLKAGRGLAIACAFLKGSVDSQKDKNRARDVKTTLVKDMSSVRLRGFAKTMFYNNHQINGTISGLYQSIGIGGLRPNTILLNWPNEKNPDELVLFAEEIIHGAANDNCLIVTKGITDFPEYSERLTGFIDIWWIVQDGGILMLIAYLLRQHKVWKGCTLRIFAVSEQDSTKSEDMKAGLQKYIYMLRIDAELFIVDLLDMEVSDEVVEKAAEVERKQKEREEMRRSKSGYLNDGFMEDNGKPRQVMMRHSDSARSFSPQPGAHTSINLDETETSFTESLFDDFYRSGTPNEDLEGAMKLNIHKMNTSVRLNRVIRENSPDSQLILLNLPSPPRNRLAFNNSYMTYLDVLTEDLPRVLFIGGSGREVITIDS.

The next 15 membrane-spanning stretches (helical) occupy residues 92-112 (GVML…TMFI), 114-134 (LFWV…AICC), 142-162 (ISLS…YFII), 174-194 (VGIL…VGGV), 196-216 (VILM…LHDT), 228-248 (LYGT…VKFV), 251-271 (LAPV…GGGI), 400-420 (FFML…GTNM), 433-453 (VGTI…AILF), 473-493 (TMVV…GAFL), 534-554 (PFLG…LGAV), 557-577 (IAEV…LIAV), 600-620 (LLGA…LACI), 791-811 (LVLF…LIVT), and 827-847 (FIDI…AYLL).

As to expression, expressed in the amphid sheath glia and the cephalic sheath glia. Also expressed in the inner labial and outer labial sheath and socket glia and as well as phasmid sheath glia.

The protein localises to the cell membrane. Probable potassium/chloride cotransporter that functions in the amphid sheath glial cells to regulate thermotaxis behavior. By maintaining chloride homeostasis, negatively regulates guanylate cyclase gcy-8 in the thermosensory AFD neurons and thereby controls the microvilli receptive ending morphology of the AFD neurons and thermotaxis. Modulates the temperature-evoked neuronal activity of the AFD neurons such as calcium responses to temperature gradients. Might also play a role in the chemotaxis behavior mediated by the sensory neurons AWA and AWC. In Caenorhabditis elegans, this protein is Potassium/chloride cotransporter 3 (kcc-3).